The sequence spans 74 residues: Anaphase-promoting complex subunit 13 (74 aa).

The protein belongs to the APC13 family. The APC/C is composed of at least 12 subunits.

The protein localises to the nucleus. Its pathway is protein modification; protein ubiquitination. In terms of biological role, component of the anaphase promoting complex/cyclosome (APC/C), a cell cycle-regulated E3 ubiquitin ligase that controls progression through mitosis and the G1 phase of the cell cycle. The APC/C complex acts by mediating ubiquitination and subsequent degradation of target proteins: it mainly mediates the formation of 'Lys-11'-linked polyubiquitin chains and, to a lower extent, the formation of 'Lys-48'- and 'Lys-63'-linked polyubiquitin chains. The APC/C complex catalyzes assembly of branched 'Lys-11'-/'Lys-48'-linked branched ubiquitin chains on target proteins. The chain is Anaphase-promoting complex subunit 13 (anapc13) from Xenopus tropicalis (Western clawed frog).